A 1066-amino-acid chain; its full sequence is Coiled-coil domain-containing protein 73 (1066 aa).

Coiled coils occupy residues 47–134 and 178–391; these read KAET…QVSQ and LVRE…KTEE. Disordered stretches follow at residues 568–600, 719–811, 854–883, 944–978, and 1003–1027; these read LDTR…SNPF, SENS…PKSG, LSPA…PEKT, KNIE…EERN, and VQQS…PGNN. 5 stretches are compositionally biased toward polar residues: residues 591–600, 742–781, 789–811, 857–869, and 948–964; these read NTDGSESNPF, RTNT…TSQA, PLTT…PKSG, ATPS…TSAR, and SDPT…SNWS. Over residues 967 to 978 the composition is skewed to basic and acidic residues; that stretch reads LDPKGQPREERN. Residues 1003-1013 are compositionally biased toward polar residues; the sequence is VQQSHSQTVKV.

The sequence is that of Coiled-coil domain-containing protein 73 (Ccdc73) from Mus musculus (Mouse).